We begin with the raw amino-acid sequence, 447 residues long: UPF0210 protein lhv_0606 (447 aa).

It belongs to the UPF0210 family. In terms of assembly, homodimer.

This chain is UPF0210 protein lhv_0606, found in Lactobacillus helveticus (strain DPC 4571).